The sequence spans 822 residues: A disintegrin and metallopeptidase domain 3 (822 aa).

The signal sequence occupies residues 1 to 16 (MLPLFLVLSYLGQVIA). Residues 187–384 (RILRIKIIMD…PELDCLRNTS (198 aa)) form the Peptidase M12B domain. Disulfide bonds link cysteine 296–cysteine 379, cysteine 338–cysteine 363, cysteine 340–cysteine 345, cysteine 456–cysteine 476, cysteine 623–cysteine 635, cysteine 629–cysteine 641, and cysteine 643–cysteine 652. Residues 395 to 484 (GSYCGNHLLE…GCAPDTKAAD (90 aa)) enclose the Disintegrin domain. The region spanning 619–653 (GTRECEADDKCQGHGICNNLNNCQCESGFAPPECD) is the EGF-like domain. A helical membrane pass occupies residues 689 to 709 (VLLISFYILLPFLVVLAFMAV).

Interacts with LY6K. Interacts with TEX101. In terms of processing, initially synthesized as a 110-kDa precursor in round spermatids, and the precursor is then processed into a 42-kDa mature protein during the sperm transport into and/or once in the epididymis. As to expression, expressed in sperm (at protein level).

It localises to the cell membrane. Involved in fertilization by controlling sperm migration into the oviduct. Promotes the binding of sperm to the oocyte zona pellucida. This Mus musculus (Mouse) protein is A disintegrin and metallopeptidase domain 3.